The sequence spans 62 residues: Large ribosomal subunit protein bL32 (62 aa).

The protein belongs to the bacterial ribosomal protein bL32 family.

The protein is Large ribosomal subunit protein bL32 (rpmF) of Treponema pallidum (strain Nichols).